The following is a 511-amino-acid chain: Cysteine--tRNA ligase 2, cytoplasmic (511 aa).

Cys-34 serves as a coordination point for Zn(2+). Residues 36 to 46 (ITAYDFSHIGH) carry the 'HIGH' region motif. 3 residues coordinate Zn(2+): Cys-214, His-239, and Glu-243. A 'KMSKS' region motif is present at residues 271–275 (KMAKS). Lys-274 provides a ligand contact to ATP. TPR repeat units follow at residues 315-348 (ESSS…DGGK) and 368-401 (SKML…LKKM).

Belongs to the class-I aminoacyl-tRNA synthetase family. Zn(2+) is required as a cofactor.

The protein resides in the cytoplasm. Its subcellular location is the cytosol. The catalysed reaction is tRNA(Cys) + L-cysteine + ATP = L-cysteinyl-tRNA(Cys) + AMP + diphosphate. This Arabidopsis thaliana (Mouse-ear cress) protein is Cysteine--tRNA ligase 2, cytoplasmic.